Here is a 43-residue protein sequence, read N- to C-terminus: Protein PsbN (43 aa).

A helical transmembrane segment spans residues 7-27 (LSIAIGSILLVITGFAIYTAF).

It belongs to the PsbN family.

The protein resides in the cellular thylakoid membrane. May play a role in photosystem I and II biogenesis. This is Protein PsbN from Crocosphaera subtropica (strain ATCC 51142 / BH68) (Cyanothece sp. (strain ATCC 51142)).